The sequence spans 369 residues: Chaperone protein DnaJ (369 aa).

A J domain is found at 7–73 (DYYEILGVPR…QKRAMYDRFG (67 aa)). A CR-type zinc finger spans residues 143 to 225 (GAEIPVEYER…CGGSGRVLRK (83 aa)). Residues C156, C159, C173, C176, C199, C202, C213, and C216 each coordinate Zn(2+). CXXCXGXG motif repeat units follow at residues 156 to 163 (CPRCGGTG), 173 to 180 (CPSCGGTG), 199 to 206 (CERCGGTG), and 213 to 220 (CHECGGSG).

This sequence belongs to the DnaJ family. As to quaternary structure, homodimer. It depends on Zn(2+) as a cofactor.

Its subcellular location is the cytoplasm. Functionally, participates actively in the response to hyperosmotic and heat shock by preventing the aggregation of stress-denatured proteins and by disaggregating proteins, also in an autonomous, DnaK-independent fashion. Unfolded proteins bind initially to DnaJ; upon interaction with the DnaJ-bound protein, DnaK hydrolyzes its bound ATP, resulting in the formation of a stable complex. GrpE releases ADP from DnaK; ATP binding to DnaK triggers the release of the substrate protein, thus completing the reaction cycle. Several rounds of ATP-dependent interactions between DnaJ, DnaK and GrpE are required for fully efficient folding. Also involved, together with DnaK and GrpE, in the DNA replication of plasmids through activation of initiation proteins. This Thermotoga petrophila (strain ATCC BAA-488 / DSM 13995 / JCM 10881 / RKU-1) protein is Chaperone protein DnaJ.